The primary structure comprises 251 residues: Diphthine synthase (251 aa).

S-adenosyl-L-methionine contacts are provided by residues D83, L86, 111-112 (SI), L163, and L205.

Belongs to the diphthine synthase family. In terms of assembly, homodimer.

The catalysed reaction is 2-[(3S)-amino-3-carboxypropyl]-L-histidyl-[translation elongation factor 2] + 3 S-adenosyl-L-methionine = diphthine-[translation elongation factor 2] + 3 S-adenosyl-L-homocysteine + 3 H(+). It functions in the pathway protein modification; peptidyl-diphthamide biosynthesis. S-adenosyl-L-methionine-dependent methyltransferase that catalyzes the trimethylation of the amino group of the modified target histidine residue in translation elongation factor 2 (EF-2), to form an intermediate called diphthine. The three successive methylation reactions represent the second step of diphthamide biosynthesis. This is Diphthine synthase from Pyrobaculum calidifontis (strain DSM 21063 / JCM 11548 / VA1).